The following is a 165-amino-acid chain: Cathelicidin-7 (165 aa).

The first 29 residues, 1–29, serve as a signal peptide directing secretion; it reads METQRASFSLGRSSLWLLLLGLVVPSASA. The propeptide occupies 30 to 130; the sequence is QDLSYREAVL…FDITCNNIQS (101 aa). 2 disulfides stabilise this stretch: Cys86-Cys97 and Cys108-Cys125. Residue Arg164 is modified to Arginine amide.

It belongs to the cathelicidin family. In terms of tissue distribution, expressed in bone marrow myeloid cells, spleen and testis.

It is found in the secreted. Its function is as follows. Exerts a potent antimicrobial activity. In Bos taurus (Bovine), this protein is Cathelicidin-7 (CATHL7).